Consider the following 278-residue polypeptide: MEFSGTHQAFRNRWAKTDDEMCKHSMSFHLHKTLRKEFFASYLYLLEQIPLVKLYALTCEYIKGEKQFYYRAQNFYKDVPPSEEGMMGDFVEISDIDLEGSRQFLKKFVGPGKAGTKCALDCGCGIGRVSKGVLFPVFESMEMLDMMEEFILHAHECYLGDYADRVESYYLYNLQEFIPPRKKYDVIWMQWVACHLTDKDLMEFLMRAKESLRPNGVIIIKDNMARQGCKLDPIDSSIIRHLDIMNGIIQRAGLNILDVEKQEGFPEAIVPVWMIAMR.

Residues Gly123, Arg128, Asp145, 174–175 (LQ), Gln190, and His195 contribute to the S-adenosyl-L-methionine site.

Belongs to the methyltransferase superfamily. NTM1 family.

It is found in the nucleus. It catalyses the reaction N-terminal L-alanyl-L-prolyl-L-lysyl-[protein] + S-adenosyl-L-methionine = N-terminal N-methyl-L-alanyl-L-prolyl-L-lysyl-[protein] + S-adenosyl-L-homocysteine + H(+). The enzyme catalyses N-terminal L-prolyl-L-prolyl-L-lysyl-[protein] + S-adenosyl-L-methionine = N-terminal N-methyl-L-prolyl-L-prolyl-L-lysyl-[protein] + S-adenosyl-L-homocysteine + H(+). The catalysed reaction is N-terminal L-seryl-L-prolyl-L-lysyl-[protein] + S-adenosyl-L-methionine = N-terminal N-methyl-L-seryl-L-prolyl-L-lysyl-[protein] + S-adenosyl-L-homocysteine + H(+). Its function is as follows. Alpha N-methyltransferase that methylates the N-terminus of target proteins containing the N-terminal motif [Ala/Pro/Ser]-Pro-Lys when the initiator Met is cleaved. Specifically catalyzes monomethylation of exposed alpha-amino group of Ala or Ser residue in the [Ala/Ser]-Pro-Lys motif and Pro in the Pro-Pro-Lys motif. Predominantly functions as a mono-methyltransferase but is also able to di-/tri-methylate the GPKRIA peptide and di-methylate the PPKRIA peptide (in vitro). May activate NTMT1 by priming its substrates for trimethylation. This Danio rerio (Zebrafish) protein is N-terminal Xaa-Pro-Lys N-methyltransferase 2 (ntmt2).